We begin with the raw amino-acid sequence, 75 residues long: Protein SlyX homolog (75 aa).

The segment at 56–75 (KNMDSSNMEDPANEPPPPHY) is disordered.

This sequence belongs to the SlyX family.

This Vibrio parahaemolyticus serotype O3:K6 (strain RIMD 2210633) protein is Protein SlyX homolog.